Reading from the N-terminus, the 365-residue chain is Chorismate synthase (365 aa).

An NADP(+)-binding site is contributed by Arg-46. Residues 124–126 (RAS), Gly-284, 299–303 (KPTPS), and Arg-326 contribute to the FMN site.

Belongs to the chorismate synthase family. FMNH2 serves as cofactor.

The enzyme catalyses 5-O-(1-carboxyvinyl)-3-phosphoshikimate = chorismate + phosphate. It functions in the pathway metabolic intermediate biosynthesis; chorismate biosynthesis; chorismate from D-erythrose 4-phosphate and phosphoenolpyruvate: step 7/7. In terms of biological role, catalyzes the anti-1,4-elimination of the C-3 phosphate and the C-6 proR hydrogen from 5-enolpyruvylshikimate-3-phosphate (EPSP) to yield chorismate, which is the branch point compound that serves as the starting substrate for the three terminal pathways of aromatic amino acid biosynthesis. This reaction introduces a second double bond into the aromatic ring system. The polypeptide is Chorismate synthase (Pyrobaculum islandicum (strain DSM 4184 / JCM 9189 / GEO3)).